A 400-amino-acid chain; its full sequence is DNA primase large subunit PriL (400 aa).

[4Fe-4S] cluster is bound by residues cysteine 247, cysteine 356, cysteine 367, and cysteine 373.

The protein belongs to the eukaryotic-type primase large subunit family. As to quaternary structure, heterodimer of a small subunit (PriS) and a large subunit (PriL). It depends on [4Fe-4S] cluster as a cofactor.

In terms of biological role, regulatory subunit of DNA primase, an RNA polymerase that catalyzes the synthesis of short RNA molecules used as primers for DNA polymerase during DNA replication. Stabilizes and modulates the activity of the small subunit, increasing the rate of DNA synthesis, and conferring RNA synthesis capability. The DNA polymerase activity may enable DNA primase to also catalyze primer extension after primer synthesis. May also play a role in DNA repair. This is DNA primase large subunit PriL from Thermococcus kodakarensis (strain ATCC BAA-918 / JCM 12380 / KOD1) (Pyrococcus kodakaraensis (strain KOD1)).